Consider the following 206-residue polypeptide: LexA repressor (206 aa).

The H-T-H motif DNA-binding region spans 28 to 48; sequence RAEIAKRLGFKSANAAEEHLK. Active-site for autocatalytic cleavage activity residues include Ser-123 and Lys-160.

This sequence belongs to the peptidase S24 family. In terms of assembly, homodimer.

It catalyses the reaction Hydrolysis of Ala-|-Gly bond in repressor LexA.. Represses a number of genes involved in the response to DNA damage (SOS response), including recA and lexA. In the presence of single-stranded DNA, RecA interacts with LexA causing an autocatalytic cleavage which disrupts the DNA-binding part of LexA, leading to derepression of the SOS regulon and eventually DNA repair. This Shewanella sediminis (strain HAW-EB3) protein is LexA repressor.